The following is a 218-amino-acid chain: Elongation factor Ts (218 aa).

The segment at 82-85 (TDFV) is involved in Mg(2+) ion dislocation from EF-Tu.

The protein belongs to the EF-Ts family.

It localises to the cytoplasm. In terms of biological role, associates with the EF-Tu.GDP complex and induces the exchange of GDP to GTP. It remains bound to the aminoacyl-tRNA.EF-Tu.GTP complex up to the GTP hydrolysis stage on the ribosome. This chain is Elongation factor Ts, found in Prochlorococcus marinus (strain MIT 9303).